The primary structure comprises 378 residues: MERGRMLVLDRKPLTPAWASPMRQALEGVQGYKAGMTLAEAARRTGLSAFSKLASNENLLGPSPKVAEAVMAAMAEPHIYPDPHSDVLRAAIGARLGVSPARVVVSPGSEALIDYVFRAVLHPGDSILLSSPTFPTYEIFGRCAEARIIDVPRLANFDIDVPAVCAAAALGPKLLVLCTPNNPTGNALKAADFQAILAATPRSTVVFVDEAYREYHEAFDTFAMLDAWGGPWVSARTFSKAYGLAGLRMGYGVASSPELVDYLDRIRPPFNVTAVSQAAALAAWEDQDYLKRTVDLTIAERGRVEAVLDDMGVEHTESHANFVFLRSPAGPEATAAHLLHQGLIIRPTPVAGGWVRITIGRPADNDALIAALPAALSL.

Lys240 bears the N6-(pyridoxal phosphate)lysine mark.

Belongs to the class-II pyridoxal-phosphate-dependent aminotransferase family. Histidinol-phosphate aminotransferase subfamily. Homodimer. Requires pyridoxal 5'-phosphate as cofactor.

It catalyses the reaction L-histidinol phosphate + 2-oxoglutarate = 3-(imidazol-4-yl)-2-oxopropyl phosphate + L-glutamate. It participates in amino-acid biosynthesis; L-histidine biosynthesis; L-histidine from 5-phospho-alpha-D-ribose 1-diphosphate: step 7/9. The polypeptide is Histidinol-phosphate aminotransferase 2 (hisC2) (Caulobacter vibrioides (strain ATCC 19089 / CIP 103742 / CB 15) (Caulobacter crescentus)).